The chain runs to 358 residues: Serine/threonine-protein phosphatase 2A activator (358 aa).

The interval 1-20 is disordered; the sequence is MAEGERQPPPDSSEEAPPAT. Ala-2 carries the post-translational modification N-acetylalanine. 3 residues coordinate ATP: Arg-183, Thr-188, and Gly-189. Mg(2+) contacts are provided by Gly-243 and Asp-249. ATP-binding residues include Pro-339, Gln-342, and His-343.

Belongs to the PTPA-type PPIase family. Associates with PP2A heterodimeric core enzyme PP2A(D), composed of a 36 kDa catalytic subunit (subunit C) and a 65 kDa constant regulatory subunit (PR65 or subunit A). Interacts with the catalytic subunit PPP2CA (via C-terminus). Interacts with PPP2CB. In terms of tissue distribution, widely expressed.

The protein localises to the cytoplasm. Its subcellular location is the nucleus. The enzyme catalyses [protein]-peptidylproline (omega=180) = [protein]-peptidylproline (omega=0). PPIases accelerate the folding of proteins. It catalyzes the cis-trans isomerization of proline imidic peptide bonds in oligopeptides. Acts as a regulatory subunit for serine/threonine-protein phosphatase 2A (PP2A). Modulates PP2A activity or substrate specificity, probably by inducing a conformational change in the catalytic subunit, a proposed direct target of the PPIase. Can reactivate inactive phosphatase PP2A-phosphatase methylesterase complexes (PP2A(i)) in presence of ATP and Mg(2+). Reversibly stimulates the variable phosphotyrosyl phosphatase activity of PP2A core heterodimer PP2A(D) in presence of ATP and Mg(2+) (in vitro). The phosphotyrosyl phosphatase activity is dependent of an ATPase activity of the PP2A(D):PPP2R4 complex. Is involved in apoptosis; the function appears to be independent from PP2A. This chain is Serine/threonine-protein phosphatase 2A activator, found in Homo sapiens (Human).